A 236-amino-acid chain; its full sequence is Small ribosomal subunit protein uS3 (236 aa).

Positions 39-107 (IREFLTEELK…DTSLNIVEVR (69 aa)) constitute a KH type-2 domain. Residues 214 to 236 (ASERRAVEGDNQGSSSNRRRENA) form a disordered region.

Belongs to the universal ribosomal protein uS3 family. In terms of assembly, part of the 30S ribosomal subunit. Forms a tight complex with proteins S10 and S14.

Functionally, binds the lower part of the 30S subunit head. Binds mRNA in the 70S ribosome, positioning it for translation. In Brucella abortus (strain S19), this protein is Small ribosomal subunit protein uS3.